Consider the following 184-residue polypeptide: uncharacterized protein (184 aa).

A 4Fe-4S domain is found at 72 to 135; that stretch reads RKSQAILLIG…GIALGSAVKV (64 aa). [4Fe-4S] cluster contacts are provided by cysteine 92, cysteine 95, cysteine 100, and cysteine 118.

The cofactor is [4Fe-4S] cluster.

This is an uncharacterized protein from Archaeoglobus fulgidus (strain ATCC 49558 / DSM 4304 / JCM 9628 / NBRC 100126 / VC-16).